The sequence spans 505 residues: ATP synthase subunit alpha, chloroplastic (505 aa).

170-177 is an ATP binding site; sequence GDRQTGKT.

Belongs to the ATPase alpha/beta chains family. F-type ATPases have 2 components, CF(1) - the catalytic core - and CF(0) - the membrane proton channel. CF(1) has five subunits: alpha(3), beta(3), gamma(1), delta(1), epsilon(1). CF(0) has four main subunits: a, b, b' and c.

It localises to the plastid. The protein localises to the chloroplast thylakoid membrane. It catalyses the reaction ATP + H2O + 4 H(+)(in) = ADP + phosphate + 5 H(+)(out). Its function is as follows. Produces ATP from ADP in the presence of a proton gradient across the membrane. The alpha chain is a regulatory subunit. The polypeptide is ATP synthase subunit alpha, chloroplastic (Phaeodactylum tricornutum (strain CCAP 1055/1)).